A 427-amino-acid chain; its full sequence is Serine protease HTRA2, mitochondrial (427 aa).

The tract at residues 33–55 (HTASSSKGSGGDNSKDKENNGQN) is disordered. A helical membrane pass occupies residues 66–86 (SAFQFCVPFSLGALVSAVLIE). Positions 78–81 (ALVS) match the IAP-binding motif. The interval 144–307 (SNGSGFVIEQ…IPIDYVKVFL (164 aa)) is serine protease. Catalysis depends on charge relay system residues histidine 162, aspartate 194, and serine 271. The PDZ domain maps to 330-415 (MGITMLTLTP…DLEIVILRGV (86 aa)).

Belongs to the peptidase S1C family. Interacts with th/DIAP1 (via BIR 2 domain).

The protein resides in the mitochondrion intermembrane space. It is found in the mitochondrion membrane. The catalysed reaction is Cleavage of non-polar aliphatic amino-acids at the P1 position, with a preference for Val, Ile and Met. At the P2 and P3 positions, Arg is selected most strongly with a secondary preference for other hydrophilic residues.. Its function is as follows. Serine protease that shows proteolytic activity against a non-specific substrate beta-casein. Promotes or induces cell death either by direct binding to and inhibition of BIRC proteins (also called inhibitor of apoptosis proteins, IAPs), leading to an increase in caspase activity, or by a BIRC inhibition-independent, caspase-independent and serine protease activity-dependent mechanism. Can antagonize antiapoptotic activity of th/Diap1 by directly inducing the degradation of th/Diap1. The polypeptide is Serine protease HTRA2, mitochondrial (Drosophila pseudoobscura pseudoobscura (Fruit fly)).